The sequence spans 154 residues: Snaclec agglucetin subunit alpha-1 (154 aa).

A signal peptide spans 1–23 (MGRFIFVSFGLLVVFLSLSGTGA). 3 cysteine pairs are disulfide-bonded: Cys-27–Cys-38, Cys-55–Cys-150, and Cys-125–Cys-142. The 118-residue stretch at 34-151 (YDQSCYRVFK…CGSEYAFVCK (118 aa)) folds into the C-type lectin domain. Asn-116 is a glycosylation site (N-linked (GlcNAc...) asparagine).

The protein belongs to the snaclec family. In terms of assembly, heterotetramer of the subunits alpha-1, alpha-2, beta-1 and beta-2; disulfide-linked. As to expression, expressed by the venom gland.

It localises to the secreted. Agglucetin specifically causes platelet aggregation and surface exposure of integrin alpha-IIb/beta-3 with a GPIb-(GP1BA-) dependent manner in washed platelets. It binds to human platelets in a saturable manner, and its binding is specifically blocked by anti-GP Ib mAb. It regulates endothelial cell survival and promotes angiogenesis by activating integrin alpha-v/beta-3 signaling through FAK/phosphatidylinositol 3-kinase (PI3K)/Akt pathway. This chain is Snaclec agglucetin subunit alpha-1, found in Deinagkistrodon acutus (Hundred-pace snake).